The chain runs to 32 residues: uncharacterized protein (32 aa).

This is an uncharacterized protein from Mastigocladus laminosus (Fischerella sp.).